The sequence spans 189 residues: Interferon alpha-16 (189 aa).

The first 23 residues, 1–23 (MALSFSLLMAVLVLSYKSICSLG), serve as a signal peptide directing secretion. Intrachain disulfides connect C24–C122 and C52–C162.

Belongs to the alpha/beta interferon family.

It localises to the secreted. Functionally, produced by macrophages, IFN-alpha have antiviral activities. Interferon stimulates the production of two enzymes: a protein kinase and an oligoadenylate synthetase. The chain is Interferon alpha-16 (IFNA16) from Homo sapiens (Human).